The primary structure comprises 149 residues: Transcriptional repressor NrdR (149 aa).

A zinc finger lies at 3-34 (CPFCSATDTKVIDSRLVADGHQVRRRRECTEC). One can recognise an ATP-cone domain in the interval 49–139 (PRVIKRDGTR…VYRAFEDVSQ (91 aa)).

The protein belongs to the NrdR family. Zn(2+) is required as a cofactor.

Its function is as follows. Negatively regulates transcription of bacterial ribonucleotide reductase nrd genes and operons by binding to NrdR-boxes. The chain is Transcriptional repressor NrdR from Shewanella frigidimarina (strain NCIMB 400).